Here is an 802-residue protein sequence, read N- to C-terminus: Copper-exporting P-type ATPase (802 aa).

HMA domains are found at residues 5–70 and 72–138; these read KKTT…YGVA and ETVE…YDAS. Cu(+) contacts are provided by Cys16, Cys19, Cys83, and Cys86. 6 helical membrane passes run 161–181, 192–212, 224–244, 256–276, 411–431, and 438–458; these read LIIS…HLFN, WFQF…FYVG, MDVL…YEMV, LYFE…YLEA, YFVP…ITLV, and PALV…LGLA. The active-site 4-aspartylphosphate intermediate is Asp495. Residues Asp690 and Asp694 each coordinate Mg(2+). The next 2 membrane-spanning stretches (helical) occupy residues 748-767 and 771-790; these read LFWA…LGLL and VAGA…ALRL.

This sequence belongs to the cation transport ATPase (P-type) (TC 3.A.3) family. Type IB subfamily.

It is found in the cell membrane. It catalyses the reaction Cu(+)(in) + ATP + H2O = Cu(+)(out) + ADP + phosphate + H(+). Its function is as follows. Involved in copper export. This is Copper-exporting P-type ATPase (copA) from Staphylococcus aureus (strain MRSA252).